Reading from the N-terminus, the 212-residue chain is Small ribosomal subunit protein uS3 (212 aa).

The region spanning 38-106 (IRKFVKKTLY…EFAIEVNEIR (69 aa)) is the KH type-2 domain.

This sequence belongs to the universal ribosomal protein uS3 family. In terms of assembly, part of the 30S ribosomal subunit. Forms a tight complex with proteins S10 and S14.

Its function is as follows. Binds the lower part of the 30S subunit head. Binds mRNA in the 70S ribosome, positioning it for translation. In Nitratidesulfovibrio vulgaris (strain ATCC 29579 / DSM 644 / CCUG 34227 / NCIMB 8303 / VKM B-1760 / Hildenborough) (Desulfovibrio vulgaris), this protein is Small ribosomal subunit protein uS3.